The chain runs to 852 residues: MSRYSATEIEAKWQEAWDKAGIFRAARTADKPKYYVLEMFPYPSGRIHIGHVRNYTMGDVIARYKLSNGFNVLHPMGFDAFGMPAENAAMASGGHPKDWTYKNIETMVAQMKPLGFGLDWSRMFATCDPEYYGQQQALFLDFLEKGLVYRKNAVVNWDPVDMTVLANEQVEDGRGWRSGALVERRELTQWFFKISDMSGELLDALDTLDDWPAKVKLMQANWIGKSRGLQFSWALTEPAHGIEALDVYTTRPDTLMGASFLGISPDHPLTKALEAENPDLAAKVAEMRKGGTTEEAIEKAEKLGADTGLRVRHPLNPDWELPVWVANFILMDYGTGAIFACPAHDQRDLDFCRKYDLPVIDTFVALDDPKPIATEAFVPLKTEKVKWIDHFAGLDVATGQEAIDTTIDWMEAKGLGTGVTKFRLRDWGLSRQRYWGCPIPVVHCDACGVVPEKKENLPIRLPDDVTFDVPGNPLDRHPTWRDCACPSCGKPARRETDTMDTFVDSSWYFARFTAPRAETPTDMAEAEYWMNVDQYIGGIEHAILHLLYSRFFARAMHICGHLPEKSKEPFNALFTQGMVTHAIYKTTGADDRPVYHYPEAVRLEGGKGYLEDGTEVEIIPSAKMSKSKNNVVDPVAIIDRFGADTARWFVLSDSPPERDVEWTDAGAEAAHKHLNRVWNLCDRIAAMDSAAPGEGDDDLLREMHKCIRDVTNGIESFGFNASIAKLYAFTNTLAKSKAGAAAQKQAIMTLAQLMSPMTPHLAEDIWAHQGGEGLIAAAPWPVADEAMLVDALVTLPVQINGKRRAEISVPADMDKTQVEKLALSTDAVQKALDGAAPKKVIVVPGRIVNVVV.

The 'HIGH' region signature appears at 41-51 (PYPSGRIHIGH). Positions 623–627 (KMSKS) match the 'KMSKS' region motif. Residue Lys626 participates in ATP binding.

This sequence belongs to the class-I aminoacyl-tRNA synthetase family.

The protein localises to the cytoplasm. It catalyses the reaction tRNA(Leu) + L-leucine + ATP = L-leucyl-tRNA(Leu) + AMP + diphosphate. This chain is Leucine--tRNA ligase, found in Ruegeria pomeroyi (strain ATCC 700808 / DSM 15171 / DSS-3) (Silicibacter pomeroyi).